Reading from the N-terminus, the 439-residue chain is Xaa-Pro dipeptidase (439 aa).

The Mn(2+) site is built by aspartate 244, aspartate 255, histidine 335, glutamate 380, and glutamate 419.

This sequence belongs to the peptidase M24B family. Bacterial-type prolidase subfamily. Mn(2+) is required as a cofactor.

It carries out the reaction Xaa-L-Pro dipeptide + H2O = an L-alpha-amino acid + L-proline. Its function is as follows. Splits dipeptides with a prolyl residue in the C-terminal position. In Shewanella sp. (strain MR-4), this protein is Xaa-Pro dipeptidase.